The primary structure comprises 504 residues: Anaerobic nitric oxide reductase transcription regulator NorR (504 aa).

Asp57 bears the 4-aspartylphosphate mark. Residues Met187 to Val416 form the Sigma-54 factor interaction domain. Residues Gly215 to Glu222 and Ala278 to Glu287 each bind ATP. A DNA-binding region (H-T-H motif) is located at residues Trp479–Lys498.

It functions in the pathway nitrogen metabolism; nitric oxide reduction. Required for the expression of anaerobic nitric oxide (NO) reductase, acts as a transcriptional activator for at least the norVW operon. Activation also requires sigma-54. In Escherichia coli O139:H28 (strain E24377A / ETEC), this protein is Anaerobic nitric oxide reductase transcription regulator NorR.